The chain runs to 252 residues: Phosphatidylserine decarboxylase proenzyme (252 aa).

S211 acts as the Schiff-base intermediate with substrate; via pyruvic acid in catalysis. S211 is subject to Pyruvic acid (Ser); by autocatalysis.

This sequence belongs to the phosphatidylserine decarboxylase family. PSD-A subfamily. In terms of assembly, heterodimer of a large membrane-associated beta subunit and a small pyruvoyl-containing alpha subunit. It depends on pyruvate as a cofactor. Post-translationally, is synthesized initially as an inactive proenzyme. Formation of the active enzyme involves a self-maturation process in which the active site pyruvoyl group is generated from an internal serine residue via an autocatalytic post-translational modification. Two non-identical subunits are generated from the proenzyme in this reaction, and the pyruvate is formed at the N-terminus of the alpha chain, which is derived from the carboxyl end of the proenzyme. The post-translation cleavage follows an unusual pathway, termed non-hydrolytic serinolysis, in which the side chain hydroxyl group of the serine supplies its oxygen atom to form the C-terminus of the beta chain, while the remainder of the serine residue undergoes an oxidative deamination to produce ammonia and the pyruvoyl prosthetic group on the alpha chain.

It localises to the cell membrane. It carries out the reaction a 1,2-diacyl-sn-glycero-3-phospho-L-serine + H(+) = a 1,2-diacyl-sn-glycero-3-phosphoethanolamine + CO2. It functions in the pathway phospholipid metabolism; phosphatidylethanolamine biosynthesis; phosphatidylethanolamine from CDP-diacylglycerol: step 2/2. Catalyzes the formation of phosphatidylethanolamine (PtdEtn) from phosphatidylserine (PtdSer). This is Phosphatidylserine decarboxylase proenzyme from Novosphingobium aromaticivorans (strain ATCC 700278 / DSM 12444 / CCUG 56034 / CIP 105152 / NBRC 16084 / F199).